A 496-amino-acid polypeptide reads, in one-letter code: Squalene epoxidase ERG1 (496 aa).

Topologically, residues 1–16 are cytoplasmic; the sequence is MSAVNVAPELINADNT. The chain crosses the membrane as a helical span at residues 17-37; that stretch reads ITYDAIVIGAGVIGPCVATGL. FAD is bound by residues 28–29, 48–49, R56, and R158; these read VI and ER. Topologically, residues 38 to 474 are lumenal; that stretch reads ARKGKKVLIV…FLGLPMALLE (437 aa). Glycyl lysine isopeptide (Lys-Gly) (interchain with G-Cter in ubiquitin) cross-links involve residues K284, K289, and K311. FAD-binding residues include D335 and M348. Residues 475-495 traverse the membrane as a helical segment; the sequence is GIMILITAIRVFTPFLFGELI. Residue G496 is a topological domain, cytoplasmic.

The protein belongs to the squalene monooxygenase family. Interacts with ERG28. FAD is required as a cofactor.

The protein resides in the microsome membrane. Its subcellular location is the endoplasmic reticulum membrane. It localises to the lipid droplet. The enzyme catalyses squalene + reduced [NADPH--hemoprotein reductase] + O2 = (S)-2,3-epoxysqualene + oxidized [NADPH--hemoprotein reductase] + H2O + H(+). It participates in terpene metabolism; lanosterol biosynthesis; lanosterol from farnesyl diphosphate: step 2/3. Inhibited by the allylamine antimycotic drugs. In terms of biological role, squalene epoxidase; part of the third module of ergosterol biosynthesis pathway that includes the late steps of the pathway. ERG1 catalyzes the epoxidation of squalene into 2,3-epoxysqualene. The third module or late pathway involves the ergosterol synthesis itself through consecutive reactions that mainly occur in the endoplasmic reticulum (ER) membrane. Firstly, the squalene synthase ERG9 catalyzes the condensation of 2 farnesyl pyrophosphate moieties to form squalene, which is the precursor of all steroids. Squalene synthase is crucial for balancing the incorporation of farnesyl diphosphate (FPP) into sterol and nonsterol isoprene synthesis. Secondly, the squalene epoxidase ERG1 catalyzes the stereospecific oxidation of squalene to (S)-2,3-epoxysqualene, which is considered to be a rate-limiting enzyme in steroid biosynthesis. Then, the lanosterol synthase ERG7 catalyzes the cyclization of (S)-2,3 oxidosqualene to lanosterol, a reaction that forms the sterol core. In the next steps, lanosterol is transformed to zymosterol through a complex process involving various demethylation, reduction and desaturation reactions. The lanosterol 14-alpha-demethylase ERG11 (also known as CYP51) catalyzes C14-demethylation of lanosterol to produce 4,4'-dimethyl cholesta-8,14,24-triene-3-beta-ol, which is critical for ergosterol biosynthesis. The C-14 reductase ERG24 reduces the C14=C15 double bond of 4,4-dimethyl-cholesta-8,14,24-trienol to produce 4,4-dimethyl-cholesta-8,24-dienol. 4,4-dimethyl-cholesta-8,24-dienol is substrate of the C-4 demethylation complex ERG25-ERG26-ERG27 in which ERG25 catalyzes the three-step monooxygenation required for the demethylation of 4,4-dimethyl and 4alpha-methylsterols, ERG26 catalyzes the oxidative decarboxylation that results in a reduction of the 3-beta-hydroxy group at the C-3 carbon to an oxo group, and ERG27 is responsible for the reduction of the keto group on the C-3. ERG28 has a role as a scaffold to help anchor ERG25, ERG26 and ERG27 to the endoplasmic reticulum and ERG29 regulates the activity of the iron-containing C4-methylsterol oxidase ERG25. Then, the sterol 24-C-methyltransferase ERG6 catalyzes the methyl transfer from S-adenosyl-methionine to the C-24 of zymosterol to form fecosterol. The C-8 sterol isomerase ERG2 catalyzes the reaction which results in unsaturation at C-7 in the B ring of sterols and thus converts fecosterol to episterol. The sterol-C5-desaturase ERG3 then catalyzes the introduction of a C-5 double bond in the B ring to produce 5-dehydroepisterol. The C-22 sterol desaturase ERG5 further converts 5-dehydroepisterol into ergosta-5,7,22,24(28)-tetraen-3beta-ol by forming the C-22(23) double bond in the sterol side chain. Finally, ergosta-5,7,22,24(28)-tetraen-3beta-ol is substrate of the C-24(28) sterol reductase ERG4 to produce ergosterol. The protein is Squalene epoxidase ERG1 of Saccharomyces cerevisiae (strain ATCC 204508 / S288c) (Baker's yeast).